The primary structure comprises 249 residues: Type I iodothyronine deiodinase (249 aa).

The Extracellular segment spans residues 1 to 12 (MGLPQPGLWLKR). A helical; Signal-anchor for type III membrane protein transmembrane segment spans residues 13 to 33 (LWVLLEVAVHVVVGKVLLILF). At 34 to 249 (PDRVKRNILA…VRAVLEKLHS (216 aa)) the chain is on the cytoplasmic side. The active site involves Sec-126. Sec-126 is a non-standard amino acid (selenocysteine).

Belongs to the iodothyronine deiodinase family. In terms of assembly, predominantly monomer. Can form homodimers but homodimerization is not essential for enzyme activity.

It is found in the cell membrane. The protein localises to the endoplasmic reticulum membrane. Its subcellular location is the basolateral cell membrane. It carries out the reaction 3,3',5-triiodo-L-thyronine + iodide + A + H(+) = L-thyroxine + AH2. The catalysed reaction is 3,3',5'-triiodo-L-thyronine + iodide + A + H(+) = L-thyroxine + AH2. It catalyses the reaction 3,3'-diiodo-L-thyronine + iodide + A + H(+) = 3,3',5'-triiodo-L-thyronine + AH2. The enzyme catalyses 3,3'-diiodo-L-thyronine + iodide + A + H(+) = 3,3',5-triiodo-L-thyronine + AH2. It carries out the reaction 3'-iodo-L-thyronine + iodide + A + H(+) = 3',5'-diiodo-L-thyronine + AH2. The catalysed reaction is 3-iodo-L-thyronine + iodide + A + H(+) = 3,5-diiodo-L-thyronine + AH2. It catalyses the reaction 3-iodo-L-thyronine + iodide + A + H(+) = 3,3'-diiodo-L-thyronine + AH2. The enzyme catalyses 3,3'-diiodothyronamine + iodide + A + H(+) = 3,3',5'-triiodothyronamine + AH2. It carries out the reaction 3'-iodothyronamine + iodide + A + H(+) = 3',5'-diiodothyronamine + AH2. The catalysed reaction is 3-iodothyronamine + iodide + A + H(+) = 3,3'-diiodothyronamine + AH2. It catalyses the reaction 3,3'-diiodothyronamine + iodide + A + H(+) = 3,3',5-triiodothyronamine + AH2. The enzyme catalyses 3-iodothyronamine + iodide + A + H(+) = 3,5-diiodothyronamine + AH2. It carries out the reaction 3,3'-diiodo-L-thyronine sulfate + iodide + A + H(+) = 3,3',5'-triiodo-L-thyronine sulfate + AH2. The catalysed reaction is 3,3',5'-triiodo-L-thyronine sulfate + iodide + A + H(+) = L-thyroxine sulfate + AH2. It catalyses the reaction 3,3'-diiodo-L-thyronine sulfate + iodide + A + H(+) = 3,3',5-triiodo-L-thyronine sulfate + AH2. Its activity is regulated as follows. Deiodination of substrates 3,3',5'-triiodothyronine, 3,3',5'-triiodothyronamine and 3',5'- diiodothyronamine are inhibited by 6n-propyl-2-thiouracil (PTU). In terms of biological role, plays a crucial role in the metabolism of thyroid hormones (TH) and has specific roles in TH activation and inactivation by deiodination. Catalyzes the deiodination of L-thyroxine (T4) to 3,5,3'-triiodothyronine (T3), 3,3',5'-triiodothyronine (rT3) to 3,3'-diiodothyronine (3,3'-T2) and 3',5'-diiodothyronine (3',5'-T2) to 3'-monoiodothyronine (3'-T1) via outer-ring deiodination (ORD). Catalyzes the deiodination of T4 to 3,3',5'-triiodothyronine (rT3) via inner-ring deiodination (IRD). Catalyzes the deiodination of T3 to 3,3'-T2, 3,5-diiodothyronine (3,5-T2) to 3- monoiodothyronine (3-T1) and 3,3'-T2 to 3-T1 via IRD. Catalyzes the phenolic ring deiodinations of 3,3',5'-triiodothyronamine and 3',5'-diiodothyronamine. Catalyzes the phenolic ring deiodination of 3,3'-diiodothyronamine and tyrosyl ring deiodinations of 3,5,3'-triiodothyronamine and 3,5-diiodothyronamine. Catalyzes the deiodination of L-thyroxine sulfate and 3,3',5-triiodo-L-thyronine sulfate via IRD and of 3,3',5'-triiodo-L-thyronine sulfate via ORD. This Homo sapiens (Human) protein is Type I iodothyronine deiodinase (DIO1).